Reading from the N-terminus, the 534-residue chain is Phosphoenolpyruvate carboxykinase (ATP) (534 aa).

Residues arginine 59, tyrosine 200, and lysine 206 each contribute to the substrate site. Residues lysine 206, histidine 225, and 242–250 (GLSGTGKTT) each bind ATP. Positions 206 and 225 each coordinate Mn(2+). Aspartate 263 is a Mn(2+) binding site. ATP-binding positions include glutamate 291, arginine 327, 443-444 (RI), and threonine 449. Residue arginine 327 participates in substrate binding.

This sequence belongs to the phosphoenolpyruvate carboxykinase (ATP) family. The cofactor is Mn(2+).

The protein localises to the cytoplasm. The catalysed reaction is oxaloacetate + ATP = phosphoenolpyruvate + ADP + CO2. Its pathway is carbohydrate biosynthesis; gluconeogenesis. Involved in the gluconeogenesis. Catalyzes the conversion of oxaloacetate (OAA) to phosphoenolpyruvate (PEP) through direct phosphoryl transfer between the nucleoside triphosphate and OAA. This is Phosphoenolpyruvate carboxykinase (ATP) from Agathobacter rectalis (strain ATCC 33656 / DSM 3377 / JCM 17463 / KCTC 5835 / VPI 0990) (Eubacterium rectale).